Consider the following 202-residue polypeptide: Peptide deformylase (202 aa).

The segment at 1 to 24 (MAGSFAQLAKNAEKKKPSISVSKE) is disordered. Fe cation contacts are provided by Cys-121 and His-163. The active site involves Glu-164. His-167 contributes to the Fe cation binding site.

It belongs to the polypeptide deformylase family. Requires Fe(2+) as cofactor.

It catalyses the reaction N-terminal N-formyl-L-methionyl-[peptide] + H2O = N-terminal L-methionyl-[peptide] + formate. In terms of biological role, removes the formyl group from the N-terminal Met of newly synthesized proteins. Requires at least a dipeptide for an efficient rate of reaction. N-terminal L-methionine is a prerequisite for activity but the enzyme has broad specificity at other positions. The sequence is that of Peptide deformylase from Prochlorococcus marinus (strain NATL1A).